The following is a 573-amino-acid chain: Kinesin light chain 1 (573 aa).

A coiled-coil region spans residues 27–156 (KTKQVIQGLE…HLEFMNQLKK (130 aa)). Positions 155-176 (KKYDDDISPSEDKDTDSTKEPL) are enriched in basic and acidic residues. Residues 155–203 (KKYDDDISPSEDKDTDSTKEPLDDLFPNDEDDPGQGIQQQHSSAAAAAQ) form a disordered region. At Ser-162 the chain carries Phosphoserine. Residues 188 to 203 (GQGIQQQHSSAAAAAQ) show a composition bias toward low complexity. TPR repeat units lie at residues 213-246 (LRTL…LEKT), 255-288 (ATML…REKT), 297-330 (AATL…REKV), 339-372 (AKQL…YQTK), and 381-414 (AKTK…AHER). Tyr-449 is subject to Phosphotyrosine. The residue at position 460 (Ser-460) is a Phosphoserine. The stretch at 464 to 497 (TTTLKNLGALYRRQGKFEAAETLEEAAMRSRKQG) is one TPR 6 repeat. 2 positions are modified to phosphoserine; by AMPK: Ser-521 and Ser-524. At Glu-547 the chain carries Phosphoserine. The disordered stretch occupies residues 553–573 (SGRASFCGKRQQQQWPGRRHR).

Belongs to the kinesin light chain family. In terms of assembly, oligomeric complex composed of two heavy chains and two light chains. Interacts with SPAG9. Interacts with ATCAY; may link mitochondria to KLC1 and regulate mitochondria localization into neuron projections. Interacts (via TPR repeats) with TOR1A; the interaction associates TOR1A with the kinesin oligomeric complex. Interacts with BORCS5. Interacts with MAPK8IP3/JIP3 and NTRK2/TRKB; interaction with NTRK2/TRKB is mediated by MAPK8IP3/JIP3. Interacts with CLSTN1; phosphorylation at Ser-460 inhibits interaction with CLSTN1. (Microbial infection) Interacts with adenovirus hexon-interlacing protein; this interaction leads to capsid disruption at the nuclear pore complex during virus entry into host cell. In terms of processing, phosphorylation at Ser-460 by ERK inhibits interaction with CLSTN1 and localization to cytoplasmic vesicles. Found in a variety of tissues. Mostly abundant in brain and spine.

The protein resides in the cell projection. It is found in the growth cone. Its subcellular location is the cytoplasmic vesicle. It localises to the cytoplasm. The protein localises to the cytoskeleton. Kinesin is a microtubule-associated force-producing protein that may play a role in organelle transport. The light chain may function in coupling of cargo to the heavy chain or in the modulation of its ATPase activity. This Homo sapiens (Human) protein is Kinesin light chain 1 (KLC1).